The primary structure comprises 448 residues: MSKTSARKPLYKSLYAQVIFAVTIGVLLGHFYPQLGTQMKPLGDGFIKLIKMIIAPIIFCTVVVGIAGMEDMKKVGKTGGLALLYFEVMSTLALVVGLLVVNVLQPGTGMHVDPMSLDTKGIAAYTAPGKMQGSVDFLLNVIPSSVVDAFAKGEILQVLLFSVLFGFALHKFGGRGTMVFDFIEKFSHVLFDIVGIIMKVAPIGAFGAMAFTIGKYGLGSLFSLGKLMGAFYLTCLIFVFGVLGIVSRLNGFSVFKFVRYIKEELLIVLGTSSSESVLPRMMEKMENLGARKSVVGLVIPTGYSFNLDGTSIYLTMAAVFIAQATDTPMTLMQQVTLLAVLLLTSKGAAGVTGSGFIVLAATLSAVGGVPVAGLALILGIDRFMSEARALTNLVGNGVATLVVAKWTGDLDMTRLHQGLDNPTTRESQEPEAILDLQVTHMDVMKAKN.

Transmembrane regions (helical) follow at residues 13–33, 49–69, 81–101, 149–169, 193–213, 227–247, 294–314, 336–356, and 357–377; these read SLYAQVIFAVTIGVLLGHFYP, LIKMIIAPIIFCTVVVGIAGM, LALLYFEVMSTLALVVGLLVV, AFAKGEILQVLLFSVLFGFAL, IVGIIMKVAPIGAFGAMAFTI, LMGAFYLTCLIFVFGVLGIVS, VVGLVIPTGYSFNLDGTSIYL, TLLAVLLLTSKGAAGVTGSGF, and IVLAATLSAVGGVPVAGLALI.

It belongs to the dicarboxylate/amino acid:cation symporter (DAACS) (TC 2.A.23) family.

It is found in the cell inner membrane. In terms of biological role, responsible for the transport of dicarboxylates such as succinate, fumarate, and malate from the periplasm across the membrane. This chain is C4-dicarboxylate transport protein, found in Albidiferax ferrireducens (strain ATCC BAA-621 / DSM 15236 / T118) (Rhodoferax ferrireducens).